Here is a 515-residue protein sequence, read N- to C-terminus: Protein pid-4 (515 aa).

The segment at aspartate 496–asparagine 515 is disordered.

As to quaternary structure, may interact with pid-2, app-1 and prmt-5.

Its subcellular location is the cytoplasm. The protein localises to the perinuclear region. It localises to the P-body. In terms of biological role, together with pid-5, it is involved in gene silencing mediated by a class of 21 nucleotide PIWI-interacting RNAs (piRNAs) that possess a uracil residue at the 5'-end (also called 21U-RNAs) and guide the Piwi protein prg-1 to its DNA targets for silencing. Together with pid-5, it is required for the biogenesis of secondary and tertiary 22G-siRNAs. Specifically, promotes the production of 22G-siRNAs from the 5' end of target mRNAs. Together with pid-5, plays a role in small RNA-directed transgenerational epigenetic inheritance (also called RNAe) over several generations and germline immortality. Together with pid-5, plays a role in the formation of liquid-like condensates in the cytoplasm called Z granules. The polypeptide is Protein pid-4 (Caenorhabditis elegans).